The sequence spans 92 residues: Probable Fe(2+)-trafficking protein (92 aa).

The protein belongs to the Fe(2+)-trafficking protein family.

Functionally, could be a mediator in iron transactions between iron acquisition and iron-requiring processes, such as synthesis and/or repair of Fe-S clusters in biosynthetic enzymes. This Shewanella baltica (strain OS223) protein is Probable Fe(2+)-trafficking protein.